Reading from the N-terminus, the 888-residue chain is Leucine--tRNA ligase (888 aa).

The 'HIGH' region motif lies at P43–H53. The 'KMSKS' region signature appears at K644–S648. K647 serves as a coordination point for ATP.

The protein belongs to the class-I aminoacyl-tRNA synthetase family.

The protein localises to the cytoplasm. It carries out the reaction tRNA(Leu) + L-leucine + ATP = L-leucyl-tRNA(Leu) + AMP + diphosphate. The polypeptide is Leucine--tRNA ligase (Rhodopseudomonas palustris (strain BisA53)).